Here is a 341-residue protein sequence, read N- to C-terminus: Arfaptin-2 (341 aa).

Positions 46-85 (NETSIVSGGYGGSGDGLIPTGSGRHPSHSTTPSGPGDEVA) are disordered. Ser-72 carries the phosphoserine modification. Thr-76 carries the post-translational modification Phosphothreonine. In terms of domain architecture, AH spans 121 to 321 (TVDLELELQI…NQKQLEQTLQ (201 aa)).

In terms of assembly, forms homodimers or heterodimers with ARFIP1. Interacts with RAC1. Specifically binds to GTP-bound ARF1 and ARF6, but binds to RAC1.GTP and RAC1.GDP with similar affinities. Interacts with ARL1. Interacts (via N-terminus) with IKBKB and IKBKG; these interactions inhibit activation of NF-kappa-B.

Its subcellular location is the golgi apparatus. It localises to the trans-Golgi network membrane. Functionally, plays a role in constitutive metalloproteinase (MMP) secretion from the trans Golgi network. May have important functions during vesicle biogenesis at certain cargo subdomains, which could be predominantly utilized by secreted MMPs, such as MMP7 and MMP2. Also involved in autophagy by regulating the starvation-dependent trafficking of ATG9A vesicles which deliver the phosphatidylinositol 4-kinase beta (PI4KB) to the autophagosome initiation site. Involved in phagophore growth during mitophagy by regulating ATG9A trafficking to mitochondria. In addition, plays a role in NF-kappa-B inhibition by interacting with IKBKB and IKBKG. The polypeptide is Arfaptin-2 (Homo sapiens (Human)).